The following is a 163-amino-acid chain: ATP synthase subunit b 1 (163 aa).

The helical transmembrane segment at 7-27 (AETWVAVAFVILMALFAYLGV) threads the bilayer.

The protein belongs to the ATPase B chain family. As to quaternary structure, F-type ATPases have 2 components, F(1) - the catalytic core - and F(0) - the membrane proton channel. F(1) has five subunits: alpha(3), beta(3), gamma(1), delta(1), epsilon(1). F(0) has three main subunits: a(1), b(2) and c(10-14). The alpha and beta chains form an alternating ring which encloses part of the gamma chain. F(1) is attached to F(0) by a central stalk formed by the gamma and epsilon chains, while a peripheral stalk is formed by the delta and b chains.

The protein resides in the cell inner membrane. Functionally, f(1)F(0) ATP synthase produces ATP from ADP in the presence of a proton or sodium gradient. F-type ATPases consist of two structural domains, F(1) containing the extramembraneous catalytic core and F(0) containing the membrane proton channel, linked together by a central stalk and a peripheral stalk. During catalysis, ATP synthesis in the catalytic domain of F(1) is coupled via a rotary mechanism of the central stalk subunits to proton translocation. Its function is as follows. Component of the F(0) channel, it forms part of the peripheral stalk, linking F(1) to F(0). This Rhodopseudomonas palustris (strain BisB5) protein is ATP synthase subunit b 1.